The chain runs to 318 residues: NADH-ubiquinone oxidoreductase chain 1 (318 aa).

The next 8 membrane-spanning stretches (helical) occupy residues F2 to L22, M70 to P90, L102 to A122, A147 to I167, Y171 to A191, L222 to F242, E253 to I273, and L294 to I314.

Belongs to the complex I subunit 1 family.

It localises to the mitochondrion inner membrane. The catalysed reaction is a ubiquinone + NADH + 5 H(+)(in) = a ubiquinol + NAD(+) + 4 H(+)(out). In terms of biological role, core subunit of the mitochondrial membrane respiratory chain NADH dehydrogenase (Complex I) that is believed to belong to the minimal assembly required for catalysis. Complex I functions in the transfer of electrons from NADH to the respiratory chain. The immediate electron acceptor for the enzyme is believed to be ubiquinone. The protein is NADH-ubiquinone oxidoreductase chain 1 (MT-ND1) of Diaemus youngi (White-winged vampire bat).